The primary structure comprises 172 residues: uncharacterized protein (172 aa).

Disordered regions lie at residues 1–54 and 82–111; these read MPRR…GGSS and ITGGFSGSGSNNAPADTSVPQSSYSNSVPE. Residues 14–29 are compositionally biased toward low complexity; sequence AAPARSASTAAALPPR. Over residues 30 to 47 the composition is skewed to pro residues; that stretch reads TMAPPPAPSRVQQAPPPT. Residues 89-109 show a composition bias toward polar residues; that stretch reads SGSNNAPADTSVPQSSYSNSV.

This is an uncharacterized protein from Schizosaccharomyces pombe (strain 972 / ATCC 24843) (Fission yeast).